The primary structure comprises 772 residues: Protocadherin beta-6 (772 aa).

A signal peptide spans 1–28 (METTLAKTPEKRQVVFLAILLLLWEAGS). 5 Cadherin domains span residues 31–133 (IRYS…SPEF), 134–242 (PDTE…APEF), 243–346 (VQSL…APKL), 347–450 (TISS…APAF), and 451–560 (TQTS…APFI). Residues 31–690 (IRYSIPEETE…QDEDMLTLYL (660 aa)) are Extracellular-facing. A disulfide bond links C96 and C102. N169 carries N-linked (GlcNAc...) asparagine glycosylation. The O-linked (Man) serine glycan is linked to S223. A glycan (O-linked (Man) threonine) is linked at T225. N417 carries N-linked (GlcNAc...) asparagine glycosylation. N566 carries N-linked (GlcNAc...) asparagine glycosylation. Positions 575–675 (LPRAAEPGYL…SQPYLPLPEV (101 aa)) constitute a Cadherin 6 domain. A helical membrane pass occupies residues 691–711 (VIALASVSSLFLLSVLLFVGV). Residues 712 to 772 (RLCRRVREAS…DFKFLNHYSQ (61 aa)) lie on the Cytoplasmic side of the membrane.

Forms homodimers in trans (molecules expressed by two different cells). Forms promiscuous heterodimers in cis (at the plasma membrane of the same cell) with other protocadherins.

The protein resides in the cell membrane. Calcium-dependent cell-adhesion protein involved in cells self-recognition and non-self discrimination. Thereby, it is involved in the establishment and maintenance of specific neuronal connections in the brain. This Mus musculus (Mouse) protein is Protocadherin beta-6.